Reading from the N-terminus, the 175-residue chain is uncharacterized protein (175 aa).

5 helical membrane-spanning segments follow: residues 25–45 (MIAIGGTIGTGLFLGAGTTIS), 46–66 (ATGPSVIFIYAIMGLFFFFLL), 97–117 (FAGWTYWIGILFACMAELTAV), 124–144 (WLPGLPAWLIEVSVLGLLTLL), and 155–175 (TEFWFAMIKIIAIISLVVTGI).

It belongs to the amino acid-polyamine-organocation (APC) superfamily.

Its subcellular location is the cell membrane. This is an uncharacterized protein from Lactobacillus delbrueckii subsp. lactis.